The chain runs to 1342 residues: DNA-directed RNA polymerase subunit beta (1342 aa).

Belongs to the RNA polymerase beta chain family. The RNAP catalytic core consists of 2 alpha, 1 beta, 1 beta' and 1 omega subunit. When a sigma factor is associated with the core the holoenzyme is formed, which can initiate transcription.

The enzyme catalyses RNA(n) + a ribonucleoside 5'-triphosphate = RNA(n+1) + diphosphate. In terms of biological role, DNA-dependent RNA polymerase catalyzes the transcription of DNA into RNA using the four ribonucleoside triphosphates as substrates. The protein is DNA-directed RNA polymerase subunit beta of Yersinia enterocolitica serotype O:8 / biotype 1B (strain NCTC 13174 / 8081).